The chain runs to 228 residues: MKAAVISFPGSNCDLDLQWAVRAIAGAECDLIKPTQTDLTAYDVVMVPGGFSYGDYLRSGAIARFSPVMAALKQFAAAGGYVIGICNGFQILTEAGLLPGALQWNRDLNFICEPVALTVENAGTAFSNQYQVGEHLTLPIAHGEGNYYADPETLAALETNGQVVFRYANNPNGSMHDIAGVTNETGNVLGMMPHPERAVEALLGGTDGLGVFQSLINQTEGADVRGAR.

The region spanning 2-225 (KAAVISFPGS…INQTEGADVR (224 aa)) is the Glutamine amidotransferase type-1 domain. C86 serves as the catalytic Nucleophile. Residues H194 and E196 contribute to the active site.

Part of the FGAM synthase complex composed of 1 PurL, 1 PurQ and 2 PurS subunits.

It localises to the cytoplasm. It carries out the reaction N(2)-formyl-N(1)-(5-phospho-beta-D-ribosyl)glycinamide + L-glutamine + ATP + H2O = 2-formamido-N(1)-(5-O-phospho-beta-D-ribosyl)acetamidine + L-glutamate + ADP + phosphate + H(+). The enzyme catalyses L-glutamine + H2O = L-glutamate + NH4(+). The protein operates within purine metabolism; IMP biosynthesis via de novo pathway; 5-amino-1-(5-phospho-D-ribosyl)imidazole from N(2)-formyl-N(1)-(5-phospho-D-ribosyl)glycinamide: step 1/2. Functionally, part of the phosphoribosylformylglycinamidine synthase complex involved in the purines biosynthetic pathway. Catalyzes the ATP-dependent conversion of formylglycinamide ribonucleotide (FGAR) and glutamine to yield formylglycinamidine ribonucleotide (FGAM) and glutamate. The FGAM synthase complex is composed of three subunits. PurQ produces an ammonia molecule by converting glutamine to glutamate. PurL transfers the ammonia molecule to FGAR to form FGAM in an ATP-dependent manner. PurS interacts with PurQ and PurL and is thought to assist in the transfer of the ammonia molecule from PurQ to PurL. The sequence is that of Phosphoribosylformylglycinamidine synthase subunit PurQ from Lacticaseibacillus paracasei (strain ATCC 334 / BCRC 17002 / CCUG 31169 / CIP 107868 / KCTC 3260 / NRRL B-441) (Lactobacillus paracasei).